The sequence spans 202 residues: Protein TIFY 11g (202 aa).

Gly residues predominate over residues 1–11 (MDAVGAAGGGA). Residues 1 to 31 (MDAVGAAGGGAMLPAAARRGQPPQPPCMTTA) form a disordered region. A compositionally biased stretch (low complexity) spans 12 to 21 (MLPAAARRGQ). A Tify domain is found at 101–136 (ATAPTAPLTIVYGGQVLVFEHYTAEAAEKLVQRTQH). Positions 185–200 (PIARKASLQRFLQKRK) match the Jas motif. The Nuclear localization signal motif lies at 187-194 (ARKASLQR).

The protein belongs to the TIFY/JAZ family. Ubiquitinated. Targeted for degradation by the SCF(COI1) E3 ubiquitin ligase-proteasome pathway during jasmonate signaling.

It is found in the nucleus. In terms of biological role, repressor of jasmonate responses. This is Protein TIFY 11g from Oryza sativa subsp. japonica (Rice).